We begin with the raw amino-acid sequence, 54 residues long: UPF0391 membrane protein BAB1_1670 (54 aa).

Helical transmembrane passes span 5 to 25 and 29 to 48; these read VLVF…GIAG and GIAQ…SLIA.

It belongs to the UPF0391 family.

It is found in the cell membrane. The sequence is that of UPF0391 membrane protein BAB1_1670 from Brucella abortus (strain 2308).